Here is a 510-residue protein sequence, read N- to C-terminus: ATP synthase subunit alpha (510 aa).

ATP is bound at residue glycine 169–threonine 176.

It belongs to the ATPase alpha/beta chains family. F-type ATPases have 2 components, CF(1) - the catalytic core - and CF(0) - the membrane proton channel. CF(1) has five subunits: alpha(3), beta(3), gamma(1), delta(1), epsilon(1). CF(0) has three main subunits: a(1), b(2) and c(9-12). The alpha and beta chains form an alternating ring which encloses part of the gamma chain. CF(1) is attached to CF(0) by a central stalk formed by the gamma and epsilon chains, while a peripheral stalk is formed by the delta and b chains.

Its subcellular location is the cell inner membrane. It carries out the reaction ATP + H2O + 4 H(+)(in) = ADP + phosphate + 5 H(+)(out). Produces ATP from ADP in the presence of a proton gradient across the membrane. The alpha chain is a regulatory subunit. This chain is ATP synthase subunit alpha, found in Azorhizobium caulinodans (strain ATCC 43989 / DSM 5975 / JCM 20966 / LMG 6465 / NBRC 14845 / NCIMB 13405 / ORS 571).